Consider the following 207-residue polypeptide: Interferon kappa (207 aa).

The first 27 residues, 1–27 (MSTKPDMIQKCLWLEILMGIFIAGTLS), serve as a signal peptide directing secretion. 2 cysteine pairs are disulfide-bonded: Cys-30-Cys-128 and Cys-59-Cys-181. The stretch at 118–148 (LDQQAEYLNQCLEEDKNENEDMKEMKENEMK) forms a coiled coil.

This sequence belongs to the alpha/beta interferon family. As to expression, expressed in keratinocytes, monocytes and in resting dendritic cells.

The protein resides in the secreted. May play a role in the regulation of immune cell function. Cytokine that imparts cellular protection against viral infection in a species-specific manner. Activates the interferon-stimulated response element signaling pathway. It is able to directly modulate cytokine release from monocytes and dendritic cells. Binds heparin. This is Interferon kappa (IFNK) from Homo sapiens (Human).